We begin with the raw amino-acid sequence, 355 residues long: Transcription factor TGAL9 (355 aa).

Disordered stretches follow at residues 83–104 and 118–188; these read FPSQPMHAGEPSPKGSSSMAAI and GSSK…DAKT. The segment covering 118 to 134 has biased composition (low complexity); that stretch reads GSSKRPPAAAAAGGQPS. Residues 135 to 144 are compositionally biased toward polar residues; that stretch reads RLNNPADQPS. 2 stretches are compositionally biased toward basic and acidic residues: residues 148-159 and 176-188; these read KDGKAAVVKKEG and SEHEGPKTPDAKT. In terms of domain architecture, bZIP spans 185–230; the sequence is DAKTLRRLAQNREAARKSRLRKKAYIQNLETSRIRLSQLEQELVQR. The basic motif stretch occupies residues 187 to 207; sequence KTLRRLAQNREAARKSRLRKK. Residues 213 to 227 are leucine-zipper; that stretch reads LETSRIRLSQLEQEL. The DOG1 domain occupies 254-355; the sequence is AAWFDGEYAR…RPSELIKVST (102 aa).

Belongs to the bZIP family. In terms of assembly, interacts with NPR5/NH4, NH5.1 and NH5.2.

The protein resides in the nucleus. In terms of biological role, transcriptional regulator involved in defense response. The polypeptide is Transcription factor TGAL9 (Oryza sativa subsp. japonica (Rice)).